Reading from the N-terminus, the 425-residue chain is Serine--tRNA ligase (425 aa).

231–233 (TAE) contacts L-serine. Position 262–264 (262–264 (RSE)) interacts with ATP. Residue Glu-285 participates in L-serine binding. An ATP-binding site is contributed by 349-352 (EISS). Ser-385 serves as a coordination point for L-serine.

The protein belongs to the class-II aminoacyl-tRNA synthetase family. Type-1 seryl-tRNA synthetase subfamily. Homodimer. The tRNA molecule binds across the dimer.

The protein localises to the cytoplasm. The enzyme catalyses tRNA(Ser) + L-serine + ATP = L-seryl-tRNA(Ser) + AMP + diphosphate + H(+). It carries out the reaction tRNA(Sec) + L-serine + ATP = L-seryl-tRNA(Sec) + AMP + diphosphate + H(+). It functions in the pathway aminoacyl-tRNA biosynthesis; selenocysteinyl-tRNA(Sec) biosynthesis; L-seryl-tRNA(Sec) from L-serine and tRNA(Sec): step 1/1. Functionally, catalyzes the attachment of serine to tRNA(Ser). Is also able to aminoacylate tRNA(Sec) with serine, to form the misacylated tRNA L-seryl-tRNA(Sec), which will be further converted into selenocysteinyl-tRNA(Sec). The chain is Serine--tRNA ligase from Bacillus licheniformis (strain ATCC 14580 / DSM 13 / JCM 2505 / CCUG 7422 / NBRC 12200 / NCIMB 9375 / NCTC 10341 / NRRL NRS-1264 / Gibson 46).